Here is a 96-residue protein sequence, read N- to C-terminus: Small ribosomal subunit protein bS18 (96 aa).

This sequence belongs to the bacterial ribosomal protein bS18 family. In terms of assembly, part of the 30S ribosomal subunit. Forms a tight heterodimer with protein bS6.

Functionally, binds as a heterodimer with protein bS6 to the central domain of the 16S rRNA, where it helps stabilize the platform of the 30S subunit. This chain is Small ribosomal subunit protein bS18, found in Borreliella afzelii (strain PKo) (Borrelia afzelii).